The primary structure comprises 404 residues: Putative CBL-interacting protein kinase 27 (404 aa).

A Protein kinase domain is found at 11-266; sequence YEMGRVLGHG…VAGLLETPWF (256 aa). ATP contacts are provided by residues 17–25 and Lys40; that span reads LGHGNFGRV. Catalysis depends on Asp134, which acts as the Proton acceptor. The interval 152 to 181 is activation loop; sequence DFGLSALACHARPDGLLHTACGTPAYVAPE. The region spanning 294 to 321 is the NAF domain; the sequence is DKDEPPEVLNAFHLISLSEGFDLSPLFE. A PPI region spans residues 335–356; the sequence is AGGTRFATREAASGVVARLEAL.

It belongs to the protein kinase superfamily. CAMK Ser/Thr protein kinase family. SNF1 subfamily. Mn(2+) is required as a cofactor.

The enzyme catalyses L-seryl-[protein] + ATP = O-phospho-L-seryl-[protein] + ADP + H(+). It catalyses the reaction L-threonyl-[protein] + ATP = O-phospho-L-threonyl-[protein] + ADP + H(+). CIPK serine-threonine protein kinases interact with CBL proteins. Binding of a CBL protein to the regulatory NAF domain of CIPK protein lead to the activation of the kinase in a calcium-dependent manner. The chain is Putative CBL-interacting protein kinase 27 (CIPK27) from Oryza sativa subsp. japonica (Rice).